A 41-amino-acid chain; its full sequence is Sucrose porin (41 aa).

The signal sequence occupies residues 1–22 (MYRKSTLAMLIALLTSAASAHA).

It belongs to the porin LamB (TC 1.B.3) family. Homotrimer.

It localises to the cell outer membrane. In terms of biological role, porin for sucrose uptake. The polypeptide is Sucrose porin (scrY) (Salmonella thompson).